Reading from the N-terminus, the 249-residue chain is MNPEAVVNYLMEWSRQKVKEAGALGIVLGVSGGVDSAVAAIIAKKAFPENCMTLLLPCESDVVDRMDSQALVEKFNIPYRIIDLDNAYHLLSTQFESYLKCEGLKGKLLRGNIKSRLRMMALYYSAQARNYLVLGTSNKSELCVGYSTKYGDAGVDLQLLGDLLKREVYELAQFLGVPETIVNKPPSGGLWSGQTDEGEMGLTYEELDNYLASGDGSPEVINKIEGMMAGSQHKRKMPPVAMIPPELRN.

29-36 (GVSGGVDS) contributes to the ATP binding site. Residue Asp-35 coordinates Mg(2+). Arg-116 is a deamido-NAD(+) binding site. ATP is bound at residue Thr-136. Glu-141 contacts Mg(2+). Deamido-NAD(+)-binding residues include Lys-149 and Asp-156. Residues Lys-165 and Ser-187 each contribute to the ATP site. Residue 233–234 (HK) participates in deamido-NAD(+) binding.

The protein belongs to the NAD synthetase family. In terms of assembly, homodimer.

The catalysed reaction is deamido-NAD(+) + NH4(+) + ATP = AMP + diphosphate + NAD(+) + H(+). Its pathway is cofactor biosynthesis; NAD(+) biosynthesis; NAD(+) from deamido-NAD(+) (ammonia route): step 1/1. Its function is as follows. Catalyzes the ATP-dependent amidation of deamido-NAD to form NAD. Uses ammonia as a nitrogen source. In Syntrophomonas wolfei subsp. wolfei (strain DSM 2245B / Goettingen), this protein is NH(3)-dependent NAD(+) synthetase.